A 217-amino-acid chain; its full sequence is ATP phosphoribosyltransferase (217 aa).

This sequence belongs to the ATP phosphoribosyltransferase family. Short subfamily. In terms of assembly, heteromultimer composed of HisG and HisZ subunits.

It localises to the cytoplasm. The catalysed reaction is 1-(5-phospho-beta-D-ribosyl)-ATP + diphosphate = 5-phospho-alpha-D-ribose 1-diphosphate + ATP. It participates in amino-acid biosynthesis; L-histidine biosynthesis; L-histidine from 5-phospho-alpha-D-ribose 1-diphosphate: step 1/9. In terms of biological role, catalyzes the condensation of ATP and 5-phosphoribose 1-diphosphate to form N'-(5'-phosphoribosyl)-ATP (PR-ATP). Has a crucial role in the pathway because the rate of histidine biosynthesis seems to be controlled primarily by regulation of HisG enzymatic activity. The polypeptide is ATP phosphoribosyltransferase (Prochlorococcus marinus (strain MIT 9313)).